A 397-amino-acid chain; its full sequence is Elongation factor Tu (397 aa).

In terms of domain architecture, tr-type G spans 10–206 (KPHVNIGTIG…AVDESIPDPV (197 aa)). Positions 19-26 (GHVDHGKT) are G1. 19-26 (GHVDHGKT) lines the GTP pocket. Thr26 is a binding site for Mg(2+). The G2 stretch occupies residues 62 to 66 (GITIN). The G3 stretch occupies residues 83 to 86 (DAPG). GTP is bound by residues 83-87 (DAPGH) and 138-141 (NKSD). A G4 region spans residues 138–141 (NKSD). The interval 176–178 (SAL) is G5.

It belongs to the TRAFAC class translation factor GTPase superfamily. Classic translation factor GTPase family. EF-Tu/EF-1A subfamily. As to quaternary structure, monomer.

It is found in the cytoplasm. It carries out the reaction GTP + H2O = GDP + phosphate + H(+). Its function is as follows. GTP hydrolase that promotes the GTP-dependent binding of aminoacyl-tRNA to the A-site of ribosomes during protein biosynthesis. The protein is Elongation factor Tu of Mycobacteroides abscessus (strain ATCC 19977 / DSM 44196 / CCUG 20993 / CIP 104536 / JCM 13569 / NCTC 13031 / TMC 1543 / L948) (Mycobacterium abscessus).